We begin with the raw amino-acid sequence, 179 residues long: Large ribosomal subunit protein uL5 (179 aa).

It belongs to the universal ribosomal protein uL5 family. Part of the 50S ribosomal subunit; part of the 5S rRNA/L5/L18/L25 subcomplex. Contacts the 5S rRNA and the P site tRNA. Forms a bridge to the 30S subunit in the 70S ribosome.

Functionally, this is one of the proteins that bind and probably mediate the attachment of the 5S RNA into the large ribosomal subunit, where it forms part of the central protuberance. In the 70S ribosome it contacts protein S13 of the 30S subunit (bridge B1b), connecting the 2 subunits; this bridge is implicated in subunit movement. Contacts the P site tRNA; the 5S rRNA and some of its associated proteins might help stabilize positioning of ribosome-bound tRNAs. This chain is Large ribosomal subunit protein uL5, found in Buchnera aphidicola subsp. Cinara cedri (strain Cc).